Reading from the N-terminus, the 247-residue chain is tRNA uridine(34) hydroxylase (247 aa).

The 95-residue stretch at 124–218 folds into the Rhodanese domain; the sequence is TKQDVIVIDT…YLEDTQNKNN (95 aa). Cys-178 (cysteine persulfide intermediate) is an active-site residue.

This sequence belongs to the TrhO family.

It carries out the reaction uridine(34) in tRNA + AH2 + O2 = 5-hydroxyuridine(34) in tRNA + A + H2O. In terms of biological role, catalyzes oxygen-dependent 5-hydroxyuridine (ho5U) modification at position 34 in tRNAs. The sequence is that of tRNA uridine(34) hydroxylase from Rickettsia africae (strain ESF-5).